A 210-amino-acid chain; its full sequence is N-(5'-phosphoribosyl)anthranilate isomerase (210 aa).

This sequence belongs to the TrpF family.

The catalysed reaction is N-(5-phospho-beta-D-ribosyl)anthranilate = 1-(2-carboxyphenylamino)-1-deoxy-D-ribulose 5-phosphate. It functions in the pathway amino-acid biosynthesis; L-tryptophan biosynthesis; L-tryptophan from chorismate: step 3/5. The protein is N-(5'-phosphoribosyl)anthranilate isomerase of Methanococcus aeolicus (strain ATCC BAA-1280 / DSM 17508 / OCM 812 / Nankai-3).